We begin with the raw amino-acid sequence, 64 residues long: Large ribosomal subunit protein bL32 (64 aa).

It belongs to the bacterial ribosomal protein bL32 family.

This is Large ribosomal subunit protein bL32 from Bifidobacterium longum (strain DJO10A).